Consider the following 88-residue polypeptide: MAVKIRLRRMGSKRNAHYRLVVADSRKPRDGRFVEEIGYYNPTTEPATVKVDEEKAIKWLKNGAQPSNTVRSLLKKTGVLAKFREQQQ.

This sequence belongs to the bacterial ribosomal protein bS16 family.

The chain is Small ribosomal subunit protein bS16 from Halothermothrix orenii (strain H 168 / OCM 544 / DSM 9562).